We begin with the raw amino-acid sequence, 65 residues long: Ferredoxin-1 (65 aa).

The region spanning 3-31 (RKFYVDQDECIACESCVEIAPGAFAMDPE) is the 4Fe-4S ferredoxin-type domain. [4Fe-4S] cluster contacts are provided by Cys12, Cys15, Cys18, and Cys55.

Homodimer. [4Fe-4S] cluster serves as cofactor.

Its function is as follows. Ferredoxins are iron-sulfur proteins that transfer electrons in a wide variety of metabolic reactions. This chain is Ferredoxin-1 (fd1), found in Desulfocurvibacter africanus (Desulfovibrio africanus).